The sequence spans 125 residues: Small ribosomal subunit protein uS12 (125 aa).

Residue D89 is modified to 3-methylthioaspartic acid. A disordered region spans residues 105–125; the sequence is AGVKDRKQARSKYGAKRPKAA. Basic residues predominate over residues 113 to 125; the sequence is ARSKYGAKRPKAA.

It belongs to the universal ribosomal protein uS12 family. Part of the 30S ribosomal subunit. Contacts proteins S8 and S17. May interact with IF1 in the 30S initiation complex.

In terms of biological role, with S4 and S5 plays an important role in translational accuracy. Its function is as follows. Interacts with and stabilizes bases of the 16S rRNA that are involved in tRNA selection in the A site and with the mRNA backbone. Located at the interface of the 30S and 50S subunits, it traverses the body of the 30S subunit contacting proteins on the other side and probably holding the rRNA structure together. The combined cluster of proteins S8, S12 and S17 appears to hold together the shoulder and platform of the 30S subunit. This is Small ribosomal subunit protein uS12 from Methylobacillus flagellatus (strain ATCC 51484 / DSM 6875 / VKM B-1610 / KT).